A 122-amino-acid chain; its full sequence is MIQHMTRLKVADNTGAKEVGVIKVLGGSKKRYASVGDIVVVSVKKATPAGLIAKGQMAKAVIVRTKKSIRRESGLLIRFDENACVLIKEDKTPRGSRIFGPVAREIRDRGYTKIASLAPEVL.

The protein belongs to the universal ribosomal protein uL14 family. Part of the 50S ribosomal subunit. Forms a cluster with proteins L3 and L19. In the 70S ribosome, L14 and L19 interact and together make contacts with the 16S rRNA in bridges B5 and B8.

Binds to 23S rRNA. Forms part of two intersubunit bridges in the 70S ribosome. This chain is Large ribosomal subunit protein uL14, found in Ureaplasma parvum serovar 3 (strain ATCC 27815 / 27 / NCTC 11736).